We begin with the raw amino-acid sequence, 227 residues long: Triosephosphate isomerase (227 aa).

6-8 contacts substrate; the sequence is NLK. The active-site Electrophile is His85. Glu152 functions as the Proton acceptor in the catalytic mechanism. The substrate site is built by Gly158 and Ser188.

This sequence belongs to the triosephosphate isomerase family. As to quaternary structure, homodimer.

Its subcellular location is the cytoplasm. The enzyme catalyses D-glyceraldehyde 3-phosphate = dihydroxyacetone phosphate. It participates in carbohydrate biosynthesis; gluconeogenesis. Its pathway is carbohydrate degradation; glycolysis; D-glyceraldehyde 3-phosphate from glycerone phosphate: step 1/1. Functionally, involved in the gluconeogenesis. Catalyzes stereospecifically the conversion of dihydroxyacetone phosphate (DHAP) to D-glyceraldehyde-3-phosphate (G3P). The polypeptide is Triosephosphate isomerase (Campylobacter concisus (strain 13826)).